The primary structure comprises 337 residues: Ketol-acid reductoisomerase (NADP(+)) (337 aa).

The KARI N-terminal Rossmann domain maps to 3–183 (VEMFYDDDAD…GGARAGVIKT (181 aa)). Residues 26-29 (YGSQ), K49, S52, S54, and 84-87 (DTAQ) contribute to the NADP(+) site. The active site involves H109. Residue G135 participates in NADP(+) binding. Residues 184–329 (TFKEETETDL…KKLRDLMSWV (146 aa)) form the KARI C-terminal knotted domain. Positions 192, 196, 228, and 232 each coordinate Mg(2+). S253 is a binding site for substrate.

This sequence belongs to the ketol-acid reductoisomerase family. It depends on Mg(2+) as a cofactor.

It carries out the reaction (2R)-2,3-dihydroxy-3-methylbutanoate + NADP(+) = (2S)-2-acetolactate + NADPH + H(+). It catalyses the reaction (2R,3R)-2,3-dihydroxy-3-methylpentanoate + NADP(+) = (S)-2-ethyl-2-hydroxy-3-oxobutanoate + NADPH + H(+). It functions in the pathway amino-acid biosynthesis; L-isoleucine biosynthesis; L-isoleucine from 2-oxobutanoate: step 2/4. The protein operates within amino-acid biosynthesis; L-valine biosynthesis; L-valine from pyruvate: step 2/4. In terms of biological role, involved in the biosynthesis of branched-chain amino acids (BCAA). Catalyzes an alkyl-migration followed by a ketol-acid reduction of (S)-2-acetolactate (S2AL) to yield (R)-2,3-dihydroxy-isovalerate. In the isomerase reaction, S2AL is rearranged via a Mg-dependent methyl migration to produce 3-hydroxy-3-methyl-2-ketobutyrate (HMKB). In the reductase reaction, this 2-ketoacid undergoes a metal-dependent reduction by NADPH to yield (R)-2,3-dihydroxy-isovalerate. This is Ketol-acid reductoisomerase (NADP(+)) from Rhodococcus opacus (strain B4).